A 137-amino-acid chain; its full sequence is Large ribosomal subunit protein uL16 (137 aa).

Over residues 1 to 16 (MLQPKRTKFRKVHTGR) the composition is skewed to basic residues. Residues 1–22 (MLQPKRTKFRKVHTGRNRGLAQ) are disordered.

This sequence belongs to the universal ribosomal protein uL16 family. As to quaternary structure, part of the 50S ribosomal subunit.

Its function is as follows. Binds 23S rRNA and is also seen to make contacts with the A and possibly P site tRNAs. This chain is Large ribosomal subunit protein uL16, found in Idiomarina loihiensis (strain ATCC BAA-735 / DSM 15497 / L2-TR).